The chain runs to 335 residues: MNLAKRILQGEQLTKETVLKIYEDTNIDTLDLLNEAYILRKHYFGKKVKLNMILNAKSGICPENCGYCGQSRDIKQKQRYALIPEEQIIDGAKVAHDNHIGTYCIVMSGRGPSDKEVDHISNTVRTIKSQHPQLKICACLGLTNDEQAKKLKSAGVDRYNHNINTSENYHDNVVTTHSYKDRTDTIELMKANNISPCSGVICGMGESNQDIVDMAFALKEMDADSIPINFLHPIKGTKFGSMDDLTPMKCLRIVALFRLINPTKEIRIAGGREVNLRSLQPLALKAANSIFVGDYLITGGQPNQLDYDMINDLGFEIDYDTCENKENKNDVSRAN.

Positions 43 to 269 (YFGKKVKLNM…INPTKEIRIA (227 aa)) constitute a Radical SAM core domain. The [4Fe-4S] cluster site is built by cysteine 61, cysteine 65, and cysteine 68. 4 residues coordinate [2Fe-2S] cluster: cysteine 104, cysteine 137, cysteine 197, and arginine 267.

The protein belongs to the radical SAM superfamily. Biotin synthase family. As to quaternary structure, homodimer. The cofactor is [4Fe-4S] cluster. Requires [2Fe-2S] cluster as cofactor.

The enzyme catalyses (4R,5S)-dethiobiotin + (sulfur carrier)-SH + 2 reduced [2Fe-2S]-[ferredoxin] + 2 S-adenosyl-L-methionine = (sulfur carrier)-H + biotin + 2 5'-deoxyadenosine + 2 L-methionine + 2 oxidized [2Fe-2S]-[ferredoxin]. Its pathway is cofactor biosynthesis; biotin biosynthesis; biotin from 7,8-diaminononanoate: step 2/2. Its function is as follows. Catalyzes the conversion of dethiobiotin (DTB) to biotin by the insertion of a sulfur atom into dethiobiotin via a radical-based mechanism. This is Biotin synthase from Staphylococcus aureus (strain MSSA476).